The following is a 406-amino-acid chain: Betaine--homocysteine S-methyltransferase 1 (406 aa).

A Hcy-binding domain is found at 11–314; that stretch reads KGILERLNAG…YHIRAIAEEL (304 aa). N6-succinyllysine is present on residues Lys40, Lys93, and Lys98. Cys217 contacts Zn(2+). 2 positions are modified to N6-succinyllysine: Lys232 and Lys241. Cys299 and Cys300 together coordinate Zn(2+). Ser330 is modified (phosphoserine). N6-succinyllysine occurs at positions 340 and 377.

As to quaternary structure, homotetramer. It depends on Zn(2+) as a cofactor.

It is found in the cytoplasm. The protein localises to the cytosol. Its subcellular location is the nucleus. The catalysed reaction is L-homocysteine + glycine betaine = N,N-dimethylglycine + L-methionine. Its pathway is amine and polyamine degradation; betaine degradation; sarcosine from betaine: step 1/2. It participates in amino-acid biosynthesis; L-methionine biosynthesis via de novo pathway; L-methionine from L-homocysteine (BhmT route): step 1/1. In terms of biological role, involved in the regulation of homocysteine metabolism. Converts betaine and homocysteine to dimethylglycine and methionine, respectively. This reaction is also required for the irreversible oxidation of choline. This Pongo abelii (Sumatran orangutan) protein is Betaine--homocysteine S-methyltransferase 1 (BHMT).